A 164-amino-acid chain; its full sequence is Aspartate carbamoyltransferase regulatory chain (164 aa).

Zn(2+) contacts are provided by Cys-116, Cys-121, Cys-146, and Cys-149.

It belongs to the PyrI family. As to quaternary structure, contains catalytic and regulatory chains. Zn(2+) is required as a cofactor.

Its function is as follows. Involved in allosteric regulation of aspartate carbamoyltransferase. This chain is Aspartate carbamoyltransferase regulatory chain, found in Staphylothermus marinus (strain ATCC 43588 / DSM 3639 / JCM 9404 / F1).